The sequence spans 378 residues: Glutamate 5-kinase (378 aa).

Lys-19 contacts ATP. Residues Ser-59, Asp-146, and Asn-158 each contribute to the substrate site. 178-179 contributes to the ATP binding site; the sequence is TD. In terms of domain architecture, PUA spans 285–363; it reads RGSVAVDAGA…SEFERLLGYT (79 aa).

The protein belongs to the glutamate 5-kinase family.

It is found in the cytoplasm. It carries out the reaction L-glutamate + ATP = L-glutamyl 5-phosphate + ADP. It functions in the pathway amino-acid biosynthesis; L-proline biosynthesis; L-glutamate 5-semialdehyde from L-glutamate: step 1/2. Catalyzes the transfer of a phosphate group to glutamate to form L-glutamate 5-phosphate. This chain is Glutamate 5-kinase, found in Polaromonas sp. (strain JS666 / ATCC BAA-500).